The chain runs to 1657 residues: Putative serine/threonine-protein kinase/receptor R826 (1657 aa).

A signal peptide spans 1-23; that stretch reads MRLNSQIVFCIVVVISCLSMIEC. N-linked (GlcNAc...) asparagine; by host glycosylation is found at asparagine 153, asparagine 178, asparagine 238, asparagine 255, asparagine 352, asparagine 454, asparagine 476, asparagine 494, and asparagine 596. The chain crosses the membrane as a helical span at residues 742-762; the sequence is IILAVVIPIAFIIVCIICILV. The 264-residue stretch at 786-1049 folds into the Protein kinase 1 domain; the sequence is LELGEQLGTG…EIMTRLSNLM (264 aa). Residues 792–800 and lysine 813 each bind ATP; that span reads LGTGAFGEV. Aspartate 909 acts as the Proton acceptor in catalysis. Residues 1089–1115 are disordered; that stretch reads VQNSYNRTDSYDLGSNNSHSSITSDTN. The Guanylate cyclase domain maps to 1134-1277; it reads VVVFTDIISA…PTVTTAAAVT (144 aa). Positions 1399 to 1651 constitute a Protein kinase 2 domain; that stretch reads IKMGEQIGLG…DDVIIVLAKF (253 aa). ATP is bound by residues 1405 to 1413 and lysine 1426; that span reads IGLGSYGVV. The active-site Proton acceptor is the aspartate 1522.

The protein localises to the membrane. It catalyses the reaction L-seryl-[protein] + ATP = O-phospho-L-seryl-[protein] + ADP + H(+). The enzyme catalyses L-threonyl-[protein] + ATP = O-phospho-L-threonyl-[protein] + ADP + H(+). In Acanthamoeba polyphaga mimivirus (APMV), this protein is Putative serine/threonine-protein kinase/receptor R826.